The following is a 212-amino-acid chain: Pyrrolidone-carboxylate peptidase (212 aa).

Residues Glu-78, Cys-141, and His-165 contribute to the active site.

Belongs to the peptidase C15 family. As to quaternary structure, homotetramer.

Its subcellular location is the cytoplasm. It catalyses the reaction Release of an N-terminal pyroglutamyl group from a polypeptide, the second amino acid generally not being Pro.. In terms of biological role, removes 5-oxoproline from various penultimate amino acid residues except L-proline. This Staphylococcus aureus (strain bovine RF122 / ET3-1) protein is Pyrrolidone-carboxylate peptidase.